A 1507-amino-acid polypeptide reads, in one-letter code: Protein similar (1507 aa).

Residues 1–85 (MVSLIDTIEA…KSRDAARCRR (85 aa)) are disordered. A compositionally biased stretch (low complexity) spans 26–49 (SASSSSCSSSFSSSPPSSSVGSPS). The segment covering 72-85 (KRKEKSRDAARCRR) has biased composition (basic and acidic residues). Positions 72 to 125 (KRKEKSRDAARCRRSKETEIFMELSAALPLKTDDVNQLDKASVMRITIAFLKIR) constitute a bHLH domain. 2 PAS domains span residues 167 to 240 (NGAE…LAQK) and 307 to 377 (PHPS…LSKG). Residues 381–422 (TSRYRFLGKYGGYCWILSQATIVYDKLKPQSVVCVNYVISNL) form the PAC domain. 4 disordered regions span residues 433–459 (QQTAASEQKEQHHQAAETEKEPEKAAD), 541–588 (HSPG…PPPT), 706–832 (TCST…CSPN), and 900–951 (YAGN…QAAV). The segment covering 439 to 459 (EQKEQHHQAAETEKEPEKAAD) has biased composition (basic and acidic residues). Residues 548 to 559 (ITAQLLSGSSSG) are compositionally biased toward polar residues. A compositionally biased stretch (pro residues) spans 578–588 (SPAPPLTPPPT). The tract at residues 692–863 (TCLLPEDINS…IDDDMPLLTE (172 aa)) is ODD. Residues 706 to 717 (TCSTTASGQHYQ) are compositionally biased toward polar residues. 2 stretches are compositionally biased toward low complexity: residues 718 to 745 (SPSSSSTSAPSNTSSSNNSYANSPLSPL) and 754 to 777 (SNPSHQQQQQHHNQQQQQQQQQQH). Over residues 803-818 (DTSCSQHLHSPSITSK) the composition is skewed to polar residues. Low complexity-rich tracts occupy residues 823 to 832 (SSLPSLCSPN), 907 to 918 (QQQQQQPQLQQQ), and 926 to 951 (SSPASTVSSLSPSPVQQHHQQQQAAV). Residues 880-908 (KEIDAIQQQLQQLQQQHHQQYAGNTGYQQ) are a coiled coil. Coiled coils occupy residues 982–1054 (AEEC…YDVQ) and 1110–1162 (QLLQ…QLQQ). 3 disordered regions span residues 1204–1228 (PQQQQHGNKRHLNSATGAGNPVESK), 1251–1287 (KDPAQQQTQAAKRAGSERWQLSAESKQQKQQQQQSNS), and 1356–1460 (FGGS…KTSI). Positions 1413-1423 (SSTSNSTNQAE) are enriched in polar residues.

In terms of assembly, efficient DNA binding requires dimerization with another bHLH protein. Interacts with Vhl. As to expression, ubiquitously expressed in the embryo.

It is found in the cytoplasm. Its subcellular location is the nucleus. Functions as a transcriptional regulator of the adaptive response to hypoxia. Binds to core DNA sequence 5'-[AG]CGTG-3' within the hypoxia response element (HRE) of target gene promoters. The protein is Protein similar (sima) of Drosophila melanogaster (Fruit fly).